A 534-amino-acid chain; its full sequence is Phosphoenolpyruvate carboxykinase (ATP) (534 aa).

Residues R60, Y195, and K201 each contribute to the substrate site. Residues K201, H221, and 237-245 (GLSGTGKTT) contribute to the ATP site. 2 residues coordinate Mn(2+): K201 and H221. D258 is a binding site for Mn(2+). Positions 287, 324, and 449 each coordinate ATP. R324 is a binding site for substrate.

Belongs to the phosphoenolpyruvate carboxykinase (ATP) family. Mn(2+) serves as cofactor.

The protein resides in the cytoplasm. It carries out the reaction oxaloacetate + ATP = phosphoenolpyruvate + ADP + CO2. Its pathway is carbohydrate biosynthesis; gluconeogenesis. Its function is as follows. Involved in the gluconeogenesis. Catalyzes the conversion of oxaloacetate (OAA) to phosphoenolpyruvate (PEP) through direct phosphoryl transfer between the nucleoside triphosphate and OAA. In Flavobacterium johnsoniae (strain ATCC 17061 / DSM 2064 / JCM 8514 / BCRC 14874 / CCUG 350202 / NBRC 14942 / NCIMB 11054 / UW101) (Cytophaga johnsonae), this protein is Phosphoenolpyruvate carboxykinase (ATP).